The chain runs to 376 residues: NAD(P)H-quinone oxidoreductase subunit 1, chloroplastic (376 aa).

9 consecutive transmembrane segments (helical) span residues 27–47, 65–85, 97–117, 130–150, 166–186, 251–271, 272–292, 310–330, and 353–373; these read LISI…GVLV, PEYA…KLLI, WLFS…YLVV, LGIF…LIAG, AAQS…ISLL, GIKF…SSLF, AVVL…IFFI, LIIP…FIFF, and FLLP…LTLF.

This sequence belongs to the complex I subunit 1 family. NDH is composed of at least 16 different subunits, 5 of which are encoded in the nucleus.

It localises to the plastid. It is found in the chloroplast thylakoid membrane. It catalyses the reaction a plastoquinone + NADH + (n+1) H(+)(in) = a plastoquinol + NAD(+) + n H(+)(out). The catalysed reaction is a plastoquinone + NADPH + (n+1) H(+)(in) = a plastoquinol + NADP(+) + n H(+)(out). In terms of biological role, NDH shuttles electrons from NAD(P)H:plastoquinone, via FMN and iron-sulfur (Fe-S) centers, to quinones in the photosynthetic chain and possibly in a chloroplast respiratory chain. The immediate electron acceptor for the enzyme in this species is believed to be plastoquinone. Couples the redox reaction to proton translocation, and thus conserves the redox energy in a proton gradient. In Chara vulgaris (Common stonewort), this protein is NAD(P)H-quinone oxidoreductase subunit 1, chloroplastic.